A 430-amino-acid polypeptide reads, in one-letter code: MGFIQVSRGTRDILPDEVIYWQYVEATARQLLHQAAYRELRTPIFEQTNLFERGIGEATDVVGKEMYTFQDRGDRSITLRPEGTAGAVRSFIENKLHAQGGVQRLWYIGPMFRYERPGAGRQRQFHQIGVEALGSQDPRADAEVIAIASQLLKSLGVPDWTLSLNSLGTAEDRQKYREALVTYLSQYKDDLDPDSQDRLQRNPLRILDSKDPKTKEIAQSAPNILDYLGTDSKQHFDRVQQLLTDLDIAYKLNPCLVRGLDYYTHTAFEFELEGLGNQATVCGGGRYDRLVSELGGPETPAVGWAIGMERLILLLQNAEITLNQSLDFYCVARGPEAEAQALLICQNLRENGFSVEMDLSGSAFGKQLKRANRSGALACLILGDTEACDRTVQLKWLASGEQESIAQADLRNLTSQLQSKLTAAKGNSST.

Belongs to the class-II aminoacyl-tRNA synthetase family. As to quaternary structure, homodimer.

The protein localises to the cytoplasm. The catalysed reaction is tRNA(His) + L-histidine + ATP = L-histidyl-tRNA(His) + AMP + diphosphate + H(+). The polypeptide is Histidine--tRNA ligase (Acaryochloris marina (strain MBIC 11017)).